Here is a 73-residue protein sequence, read N- to C-terminus: DNA-directed RNA polymerase subunit omega (73 aa).

It belongs to the RNA polymerase subunit omega family. In terms of assembly, the RNAP catalytic core consists of 2 alpha, 1 beta, 1 beta' and 1 omega subunit. When a sigma factor is associated with the core the holoenzyme is formed, which can initiate transcription.

It carries out the reaction RNA(n) + a ribonucleoside 5'-triphosphate = RNA(n+1) + diphosphate. Functionally, promotes RNA polymerase assembly. Latches the N- and C-terminal regions of the beta' subunit thereby facilitating its interaction with the beta and alpha subunits. This chain is DNA-directed RNA polymerase subunit omega, found in Lactobacillus delbrueckii subsp. bulgaricus (strain ATCC BAA-365 / Lb-18).